We begin with the raw amino-acid sequence, 495 residues long: Zinc finger and SCAN domain-containing protein 5B (495 aa).

A disordered region spans residues 1–40 (MAANWTLSWGQGGPCNSPGSDTPRSVASPETQLGNHDRNP). Residues 17-34 (SPGSDTPRSVASPETQLG) are compositionally biased toward polar residues. An SCAN box domain is found at 44 to 126 (HMNFRMFSCP…DLLRNNRRPK (83 aa)). Disordered stretches follow at residues 150 to 183 (APAS…RREQ) and 227 to 347 (ENRE…PDGQ). Over residues 161 to 173 (VSSQWASSVNQMH) the composition is skewed to polar residues. The segment covering 250–262 (RAKEGKEPQKRAS) has biased composition (basic and acidic residues). A compositionally biased stretch (polar residues) spans 292–310 (NLSSPKRSKPDASSISQEE). 5 C2H2-type zinc fingers span residues 355–377 (FACD…RRSH), 383–405 (FQCD…QRVH), 411–433 (YMCD…KRIH), 439–461 (FKCK…QRTH), and 467–489 (YKCP…LKTH).

The protein localises to the nucleus. May be involved in transcriptional regulation. The sequence is that of Zinc finger and SCAN domain-containing protein 5B (ZSCAN5B) from Homo sapiens (Human).